The chain runs to 152 residues: Deoxyuridine 5'-triphosphate nucleotidohydrolase (152 aa).

Residues 71-73 (RSG), Asn-84, 88-90 (LID), and Met-98 each bind substrate.

This sequence belongs to the dUTPase family. Mg(2+) is required as a cofactor.

The catalysed reaction is dUTP + H2O = dUMP + diphosphate + H(+). The protein operates within pyrimidine metabolism; dUMP biosynthesis; dUMP from dCTP (dUTP route): step 2/2. Functionally, this enzyme is involved in nucleotide metabolism: it produces dUMP, the immediate precursor of thymidine nucleotides and it decreases the intracellular concentration of dUTP so that uracil cannot be incorporated into DNA. This Shewanella sp. (strain ANA-3) protein is Deoxyuridine 5'-triphosphate nucleotidohydrolase.